The chain runs to 197 residues: Probable S-adenosylmethionine-dependent methyltransferase MJ0882 (197 aa).

S-adenosyl-L-methionine is bound by residues 63–67 (GCGYG), D84, and N129. Substrate is bound at residue 129-132 (NPPI).

Belongs to the methyltransferase superfamily.

Probable methyltransferase that uses S-adenosylmethionine as the methyl donor. Binds neither NAD nor NADP in vitro. This Methanocaldococcus jannaschii (strain ATCC 43067 / DSM 2661 / JAL-1 / JCM 10045 / NBRC 100440) (Methanococcus jannaschii) protein is Probable S-adenosylmethionine-dependent methyltransferase MJ0882.